The chain runs to 471 residues: 7-hydroxymethyl chlorophyll a reductase, chloroplastic (471 aa).

Residues Met1 to Ser44 constitute a chloroplast transit peptide.

It belongs to the FrhB family. Requires FAD as cofactor. It depends on iron-sulfur cluster as a cofactor.

Its subcellular location is the plastid. It is found in the chloroplast. The catalysed reaction is chlorophyll a + 2 oxidized [2Fe-2S]-[ferredoxin] + H2O = 7(1)-hydroxychlorophyll a + 2 reduced [2Fe-2S]-[ferredoxin] + 2 H(+). Its function is as follows. Probable iron-sulfur flavoprotein that converts 7-hydroxymethyl chlorophyll a to chlorophyll a using ferredoxin as a reducing equivalent. Catalyzes the reduction of a hydroxymethyl group to a methyl group. This is 7-hydroxymethyl chlorophyll a reductase, chloroplastic (HCAR) from Oryza sativa subsp. japonica (Rice).